We begin with the raw amino-acid sequence, 182 residues long: Ribosome maturation factor RimM (182 aa).

The region spanning glutamate 103–phenylalanine 182 is the PRC barrel domain.

The protein belongs to the RimM family. As to quaternary structure, binds ribosomal protein uS19.

The protein resides in the cytoplasm. Its function is as follows. An accessory protein needed during the final step in the assembly of 30S ribosomal subunit, possibly for assembly of the head region. Essential for efficient processing of 16S rRNA. May be needed both before and after RbfA during the maturation of 16S rRNA. It has affinity for free ribosomal 30S subunits but not for 70S ribosomes. The sequence is that of Ribosome maturation factor RimM from Yersinia pestis bv. Antiqua (strain Antiqua).